Reading from the N-terminus, the 88-residue chain is Small ribosomal subunit protein bS20 (88 aa).

The segment covering 1–16 (MANTHSAKKATRKITR) has biased composition (basic residues). A disordered region spans residues 1–20 (MANTHSAKKATRKITRRTAV).

This sequence belongs to the bacterial ribosomal protein bS20 family.

In terms of biological role, binds directly to 16S ribosomal RNA. This chain is Small ribosomal subunit protein bS20, found in Nitrobacter hamburgensis (strain DSM 10229 / NCIMB 13809 / X14).